Reading from the N-terminus, the 505-residue chain is Lysine--tRNA ligase (505 aa).

Mg(2+) is bound by residues Glu-415 and Glu-422.

The protein belongs to the class-II aminoacyl-tRNA synthetase family. As to quaternary structure, homodimer. Mg(2+) is required as a cofactor.

It localises to the cytoplasm. The enzyme catalyses tRNA(Lys) + L-lysine + ATP = L-lysyl-tRNA(Lys) + AMP + diphosphate. In Shigella flexneri, this protein is Lysine--tRNA ligase.